Here is a 600-residue protein sequence, read N- to C-terminus: L-galactono-1,4-lactone dehydrogenase, mitochondrial (600 aa).

Residues 1–25 (MLRSLLLRRSNARSLRPPFPPLRTL) constitute a mitochondrion transit peptide. The segment at 16-51 (RPPFPPLRTLCTSGQTLTPAPPPPPPPPPPISSSAS) is disordered. A propeptide spans 26–91 (CTSGQTLTPA…AKHKKAQIFR (66 aa)) (removed in mature form). Positions 34–46 (PAPPPPPPPPPPI) are enriched in pro residues. The chain crosses the membrane as a helical span at residues 58–74 (YAGYAALALFSGAATYF). Positions 108–279 (THEVQTRNFN…AEVTLQCVER (172 aa)) constitute an FAD-binding PCMH-type domain.

The cofactor is FAD.

Its subcellular location is the mitochondrion membrane. It carries out the reaction L-galactono-1,4-lactone + 4 Fe(III)-[cytochrome c] = L-dehydroascorbate + 4 Fe(II)-[cytochrome c] + 5 H(+). Its pathway is cofactor biosynthesis; L-ascorbate biosynthesis. With respect to regulation, inhibited by sulfhydryl-modifying agents such as N-ethylmaleimide, monoiodoacetic acid and p-hydroxymercuribenzoic acid. No inhibition by riboflavin and lycorine. Involved in the biosynthesis of ascorbic acid. Uses L-galactono-1,4-lactone as substrate, but not L-gulono-1,4-lactone, D-galactono-1,4-lactone, D-gulono-1,4-lactone, D-erythronic-1,4-lactone, D-xylonic-1,4-lactone, L-mannono-1,4-lactone, D-galactonic acid, D-glucuronic acid or D-gluconic acid. FAD, NAD, NADP and O(2) cannot act as electron acceptor. The protein is L-galactono-1,4-lactone dehydrogenase, mitochondrial of Brassica oleracea (Wild cabbage).